The following is a 356-amino-acid chain: Biotin synthase (356 aa).

Residues 54–278 enclose the Radical SAM core domain; sequence GEVQLCTLLS…VAVARITMPL (225 aa). [4Fe-4S] cluster-binding residues include Cys69, Cys73, and Cys76. Cys113, Cys144, Cys204, and Arg282 together coordinate [2Fe-2S] cluster.

It belongs to the radical SAM superfamily. Biotin synthase family. Homodimer. The cofactor is [4Fe-4S] cluster. [2Fe-2S] cluster is required as a cofactor.

It catalyses the reaction (4R,5S)-dethiobiotin + (sulfur carrier)-SH + 2 reduced [2Fe-2S]-[ferredoxin] + 2 S-adenosyl-L-methionine = (sulfur carrier)-H + biotin + 2 5'-deoxyadenosine + 2 L-methionine + 2 oxidized [2Fe-2S]-[ferredoxin]. It functions in the pathway cofactor biosynthesis; biotin biosynthesis; biotin from 7,8-diaminononanoate: step 2/2. Catalyzes the conversion of dethiobiotin (DTB) to biotin by the insertion of a sulfur atom into dethiobiotin via a radical-based mechanism. The chain is Biotin synthase from Novosphingobium aromaticivorans (strain ATCC 700278 / DSM 12444 / CCUG 56034 / CIP 105152 / NBRC 16084 / F199).